The following is a 201-amino-acid chain: 3-isopropylmalate dehydratase small subunit (201 aa).

This sequence belongs to the LeuD family. LeuD type 1 subfamily. As to quaternary structure, heterodimer of LeuC and LeuD.

The enzyme catalyses (2R,3S)-3-isopropylmalate = (2S)-2-isopropylmalate. The protein operates within amino-acid biosynthesis; L-leucine biosynthesis; L-leucine from 3-methyl-2-oxobutanoate: step 2/4. Catalyzes the isomerization between 2-isopropylmalate and 3-isopropylmalate, via the formation of 2-isopropylmaleate. This is 3-isopropylmalate dehydratase small subunit from Buchnera aphidicola subsp. Baizongia pistaciae (strain Bp).